Here is a 497-residue protein sequence, read N- to C-terminus: Zinc finger protein 3 (497 aa).

Residues 1-20 show a composition bias toward basic and acidic residues; it reads MGTEKKEGLPKEETSEDSKP. A disordered region spans residues 1–53; it reads MGTEKKEGLPKEETSEDSKPHGQTVEKLAQEVCHGHEFGEASEEDMSEGHLRE. Residues Lys-6 and Lys-11 each participate in a glycyl lysine isopeptide (Lys-Gly) (interchain with G-Cter in SUMO2) cross-link. 13 consecutive C2H2-type zinc fingers follow at residues 136–158, 164–186, 192–214, 220–242, 248–270, 276–298, 304–326, 332–354, 360–382, 388–410, 416–438, 444–466, and 472–494; these read HTCKECGKAFNQNSHLIQHMRVH, FECKECGKTFGTNSSLRRHQRIH, FACTECGKAFIQSSHLIHHHRIH, YKCEECGKAFSQNSALILHQRIH, YECNECGKTFRVSSQLIQHQRIH, HECSECGKAFKHSSGLIRHQKIH, YLCNECGKGFGQSSELIRHQRIH, YECSECGKTFGQNSEIIRHIRIH, YVCKECGKAFRGNSELLRHERIH, YECFECGKAFRRTSHLIVHQRIH, HQCNECARTFWDNSELLLHQKIH, YECSECEKTFSQHSQLTIHQRIH, and YECQECQKTFSRSSHLLRHQSVH.

Belongs to the krueppel C2H2-type zinc-finger protein family.

Its subcellular location is the nucleus. In terms of biological role, may be involved in transcriptional regulation. In Mus musculus (Mouse), this protein is Zinc finger protein 3 (Zfp3).